Here is a 250-residue protein sequence, read N- to C-terminus: Serine/arginine-rich splicing factor RS31A (250 aa).

RRM domains are found at residues 2-74 (RHVY…WAKD) and 95-166 (KTLF…YALR). Positions 170–250 (EREDRYAGSR…SRSPIQRARG (81 aa)) are disordered. The segment covering 177-191 (GSRRRRSPSPVYRRR) has biased composition (basic residues). A phosphoserine mark is found at serine 183, serine 185, serine 201, serine 218, and serine 243. A compositionally biased stretch (basic and acidic residues) spans 192–230 (PSPDYTRRRSPEYDRYKGPAPYERRKSPDYGRRSSDYGR).

It belongs to the splicing factor SR family. RS subfamily. As to quaternary structure, component of the spliceosome. Interacts with MOS14.

Its subcellular location is the nucleus speckle. The protein resides in the nucleus. It is found in the nucleoplasm. Probably involved in intron recognition and spliceosome assembly. The chain is Serine/arginine-rich splicing factor RS31A (RS31A) from Arabidopsis thaliana (Mouse-ear cress).